The following is a 355-amino-acid chain: UDP-N-acetylglucosamine--N-acetylmuramyl-(pentapeptide) pyrophosphoryl-undecaprenol N-acetylglucosamine transferase (355 aa).

UDP-N-acetyl-alpha-D-glucosamine is bound by residues 15 to 17, N127, R163, S191, I244, 263 to 268, and Q288; these read TGG and ALTVSE.

This sequence belongs to the glycosyltransferase 28 family. MurG subfamily.

The protein localises to the cell inner membrane. It carries out the reaction di-trans,octa-cis-undecaprenyl diphospho-N-acetyl-alpha-D-muramoyl-L-alanyl-D-glutamyl-meso-2,6-diaminopimeloyl-D-alanyl-D-alanine + UDP-N-acetyl-alpha-D-glucosamine = di-trans,octa-cis-undecaprenyl diphospho-[N-acetyl-alpha-D-glucosaminyl-(1-&gt;4)]-N-acetyl-alpha-D-muramoyl-L-alanyl-D-glutamyl-meso-2,6-diaminopimeloyl-D-alanyl-D-alanine + UDP + H(+). It functions in the pathway cell wall biogenesis; peptidoglycan biosynthesis. Functionally, cell wall formation. Catalyzes the transfer of a GlcNAc subunit on undecaprenyl-pyrophosphoryl-MurNAc-pentapeptide (lipid intermediate I) to form undecaprenyl-pyrophosphoryl-MurNAc-(pentapeptide)GlcNAc (lipid intermediate II). In Sodalis glossinidius (strain morsitans), this protein is UDP-N-acetylglucosamine--N-acetylmuramyl-(pentapeptide) pyrophosphoryl-undecaprenol N-acetylglucosamine transferase.